The primary structure comprises 234 residues: Triosephosphate isomerase (234 aa).

8–10 (NFK) is a substrate binding site. His-90 acts as the Electrophile in catalysis. Glu-159 functions as the Proton acceptor in the catalytic mechanism. Positions 165 and 197 each coordinate substrate.

Belongs to the triosephosphate isomerase family. As to quaternary structure, homodimer.

Its subcellular location is the cytoplasm. It carries out the reaction D-glyceraldehyde 3-phosphate = dihydroxyacetone phosphate. It participates in carbohydrate biosynthesis; gluconeogenesis. The protein operates within carbohydrate degradation; glycolysis; D-glyceraldehyde 3-phosphate from glycerone phosphate: step 1/1. Involved in the gluconeogenesis. Catalyzes stereospecifically the conversion of dihydroxyacetone phosphate (DHAP) to D-glyceraldehyde-3-phosphate (G3P). The polypeptide is Triosephosphate isomerase (Helicobacter pylori (strain Shi470)).